A 91-amino-acid chain; its full sequence is Small ribosomal subunit protein uS19 (91 aa).

It belongs to the universal ribosomal protein uS19 family.

Protein S19 forms a complex with S13 that binds strongly to the 16S ribosomal RNA. The sequence is that of Small ribosomal subunit protein uS19 from Actinobacillus pleuropneumoniae serotype 7 (strain AP76).